Here is a 146-residue protein sequence, read N- to C-terminus: Hemoglobin subunit beta-2 (146 aa).

At Val1 the chain carries N-acetylvaline. Residues 2 to 146 (HLHGDEKAAV…VASALAHKYH (145 aa)) enclose the Globin domain. N6-succinyllysine is present on Lys17. At Ser44 the chain carries Phosphoserine. Residue Lys59 is modified to N6-succinyllysine. The heme b site is built by His63 and His92. Arg104 bears the Asymmetric dimethylarginine mark. Thr123 bears the Phosphothreonine mark.

Belongs to the globin family. As to quaternary structure, heterotetramer of two alpha chains and two beta chains. As to expression, red blood cells.

Its function is as follows. Involved in oxygen transport from the lung to the various peripheral tissues. In Tapirus terrestris (Lowland tapir), this protein is Hemoglobin subunit beta-2 (HBB2).